An 859-amino-acid polypeptide reads, in one-letter code: DNA mismatch repair protein MutS (859 aa).

622-629 (GPNMGGKS) is an ATP binding site.

The protein belongs to the DNA mismatch repair MutS family.

Its function is as follows. This protein is involved in the repair of mismatches in DNA. It is possible that it carries out the mismatch recognition step. This protein has a weak ATPase activity. The sequence is that of DNA mismatch repair protein MutS from Coxiella burnetii (strain Dugway 5J108-111).